The sequence spans 687 residues: Glycine--tRNA ligase beta subunit (687 aa).

It belongs to the class-II aminoacyl-tRNA synthetase family. As to quaternary structure, tetramer of two alpha and two beta subunits.

Its subcellular location is the cytoplasm. It carries out the reaction tRNA(Gly) + glycine + ATP = glycyl-tRNA(Gly) + AMP + diphosphate. This chain is Glycine--tRNA ligase beta subunit, found in Lactobacillus acidophilus (strain ATCC 700396 / NCK56 / N2 / NCFM).